A 205-amino-acid chain; its full sequence is uncharacterized protein (205 aa).

Active-site charge relay system residues include serine 119 and histidine 160.

Belongs to the peptidase S51 family.

This is an uncharacterized protein from Listeria monocytogenes serovar 1/2a (strain ATCC BAA-679 / EGD-e).